The sequence spans 636 residues: ATP-dependent zinc metalloprotease FtsH 1 (636 aa).

Residues 1-18 lie on the Cytoplasmic side of the membrane; sequence MKLSPPKKNLPPQKNNEP. Residues 19-39 traverse the membrane as a helical segment; that stretch reads PFPYLRLLVQVGIALFLVWIW. Over 40–126 the chain is Periplasmic; sequence QESLHKATVS…YGSVKPSLLS (87 aa). A helical membrane pass occupies residues 127 to 147; that stretch reads QILFSWVVPILIFFLVWFALA. The Cytoplasmic segment spans residues 148–636; it reads RFMGGGGAGY…KEAPSYSSTL (489 aa). 220 to 227 provides a ligand contact to ATP; that stretch reads GPPGTGKT. A Zn(2+)-binding site is contributed by His-442. Glu-443 is a catalytic residue. Zn(2+) contacts are provided by His-446 and Asp-519.

It in the central section; belongs to the AAA ATPase family. The protein in the C-terminal section; belongs to the peptidase M41 family. As to quaternary structure, homohexamer. Zn(2+) serves as cofactor.

Its subcellular location is the cell inner membrane. Acts as a processive, ATP-dependent zinc metallopeptidase for both cytoplasmic and membrane proteins. Plays a role in the quality control of integral membrane proteins. The polypeptide is ATP-dependent zinc metalloprotease FtsH 1 (Methylacidiphilum infernorum (isolate V4) (Methylokorus infernorum (strain V4))).